Reading from the N-terminus, the 131-residue chain is Heat shock protein 15 homolog (131 aa).

In terms of domain architecture, S4 RNA-binding spans 6-67 (VRLDKWLWAA…NEEKEIKIIA (62 aa)). A disordered region spans residues 98 to 131 (ARKNNSLSMPHPDRRPNKKERRDLLKFKHQDKFE). A compositionally biased stretch (basic and acidic residues) spans 108 to 131 (HPDRRPNKKERRDLLKFKHQDKFE).

Belongs to the HSP15 family.

Functionally, involved in the recycling of free 50S ribosomal subunits that still carry a nascent chain. Binds RNA more specifically than DNA. Binds with very high affinity to the free 50S ribosomal subunit. Does not bind it when it is part of the 70S ribosome. This is Heat shock protein 15 homolog (hslR) from Haemophilus influenzae (strain ATCC 51907 / DSM 11121 / KW20 / Rd).